Here is a 295-residue protein sequence, read N- to C-terminus: Nucleotide-binding protein BPUM_3115 (295 aa).

16-23 provides a ligand contact to ATP; the sequence is GMSGAGKT. 67–70 contributes to the GTP binding site; the sequence is DLRG.

It belongs to the RapZ-like family.

In terms of biological role, displays ATPase and GTPase activities. This chain is Nucleotide-binding protein BPUM_3115, found in Bacillus pumilus (strain SAFR-032).